The chain runs to 297 residues: SH2 domain-containing protein 6 (297 aa).

Disordered stretches follow at residues 1–61 and 74–93; these read MSCP…FPTR and MNPQPAKQGPVFGRQGRGTS. Residues 36 to 45 are compositionally biased toward pro residues; the sequence is PSKPPLPPPQ. The 109-residue stretch at 187–295 folds into the SH2 domain; the sequence is WYSGNCDRQS…RGLTYLRFPT (109 aa).

The polypeptide is SH2 domain-containing protein 6 (Sh2d6) (Mus musculus (Mouse)).